We begin with the raw amino-acid sequence, 307 residues long: UDP-3-O-acyl-N-acetylglucosamine deacetylase (307 aa).

Positions 78, 241, and 245 each coordinate Zn(2+). The active-site Proton donor is the H268.

The protein belongs to the LpxC family. The cofactor is Zn(2+).

The catalysed reaction is a UDP-3-O-[(3R)-3-hydroxyacyl]-N-acetyl-alpha-D-glucosamine + H2O = a UDP-3-O-[(3R)-3-hydroxyacyl]-alpha-D-glucosamine + acetate. The protein operates within glycolipid biosynthesis; lipid IV(A) biosynthesis; lipid IV(A) from (3R)-3-hydroxytetradecanoyl-[acyl-carrier-protein] and UDP-N-acetyl-alpha-D-glucosamine: step 2/6. In terms of biological role, catalyzes the hydrolysis of UDP-3-O-myristoyl-N-acetylglucosamine to form UDP-3-O-myristoylglucosamine and acetate, the committed step in lipid A biosynthesis. In Acidovorax ebreus (strain TPSY) (Diaphorobacter sp. (strain TPSY)), this protein is UDP-3-O-acyl-N-acetylglucosamine deacetylase.